The sequence spans 308 residues: F420-non-reducing hydrogenase subunit G (308 aa).

This sequence belongs to the [NiFe]/[NiFeSe] hydrogenase small subunit family. In terms of assembly, the F420-non-reducing hydrogenase is composed of three subunits; MvhA, MvhD and MvhG. It forms a complex with the heterodisulfide reductase (hdr).

Its function is as follows. Part of a complex that provides reducing equivalents for heterodisulfide reductase. This chain is F420-non-reducing hydrogenase subunit G (mvhG), found in Methanothermobacter thermautotrophicus (strain ATCC 29096 / DSM 1053 / JCM 10044 / NBRC 100330 / Delta H) (Methanobacterium thermoautotrophicum).